The following is a 325-amino-acid chain: Casein kinase I isoform alpha (325 aa).

The residue at position 2 (Ala-2) is an N-acetylalanine. Ser-4 bears the Phosphoserine mark. The residue at position 8 (Lys-8) is an N6-acetyllysine. Residues 17–285 (YKLVRKIGSG…YLRQLFRILF (269 aa)) enclose the Protein kinase domain. ATP-binding positions include 23-31 (IGSGSFGDI) and Lys-46. The active-site Proton acceptor is the Asp-136.

Belongs to the protein kinase superfamily. CK1 Ser/Thr protein kinase family. Casein kinase I subfamily. Interacts with the Axin complex. Interacts with TUT1, leading to TUT1 phosphorylation. Interacts with FAM83A, FAM83B, FAM83C, FAM83D, FAM83E, FAM83F, FAM83G and FAM83H (via DUF1669). Interaction with FAM83H recruits CSNK1A1 to keratin filaments. In terms of processing, phosphorylated by MTOR in response to mitogenic stimulation, leading to its activation.

Its subcellular location is the cytoplasm. The protein resides in the cytoskeleton. It is found in the microtubule organizing center. The protein localises to the centrosome. It localises to the chromosome. Its subcellular location is the centromere. The protein resides in the kinetochore. It is found in the nucleus speckle. The protein localises to the cilium basal body. It localises to the spindle. It catalyses the reaction L-seryl-[protein] + ATP = O-phospho-L-seryl-[protein] + ADP + H(+). The enzyme catalyses L-threonyl-[protein] + ATP = O-phospho-L-threonyl-[protein] + ADP + H(+). Functionally, casein kinases are operationally defined by their preferential utilization of acidic proteins such as caseins as substrates. Can phosphorylate a large number of proteins. Participates in Wnt signaling. Phosphorylates CTNNB1 at 'Ser-45'. May phosphorylate PER1 and PER2. May play a role in segregating chromosomes during mitosis. May play a role in keratin cytoskeleton disassembly and thereby, it may regulate epithelial cell migration. Acts as a positive regulator of mTORC1 and mTORC2 signaling in response to nutrients by mediating phosphorylation of DEPTOR inhibitor. Acts as an inhibitor of NLRP3 inflammasome assembly by mediating phosphorylation of NLRP3. This chain is Casein kinase I isoform alpha (CSNK1A1), found in Oryctolagus cuniculus (Rabbit).